We begin with the raw amino-acid sequence, 166 residues long: MMEEYVVIGKVLDTFGLEGELKVRPYAPPEVFENLEKVYLKRKGGDWVPFEVEWVDFIDDKVIIKFKGYDSIDEVEQFKGAKLFLPKEELPELGEEEYYAYELVGMEVETDKGKKLGKVERVQDMGPYDALVLDKENLLVPFVSDIVLKVDKENKKIIVKEELLPV.

The PRC barrel domain maps to 95-164 (EEEYYAYELV…KKIIVKEELL (70 aa)).

Belongs to the RimM family. In terms of assembly, binds ribosomal protein uS19.

The protein localises to the cytoplasm. In terms of biological role, an accessory protein needed during the final step in the assembly of 30S ribosomal subunit, possibly for assembly of the head region. Essential for efficient processing of 16S rRNA. May be needed both before and after RbfA during the maturation of 16S rRNA. It has affinity for free ribosomal 30S subunits but not for 70S ribosomes. This is Ribosome maturation factor RimM from Aquifex aeolicus (strain VF5).